The primary structure comprises 800 residues: Nucleolar RNA helicase 2-B (800 aa).

A compositionally biased stretch (basic and acidic residues) spans 1–14 (MPGKVYTDEMEGKS). Residues 1 to 200 (MPGKVYTDEM…TDTSEITAAN (200 aa)) form a disordered region. The span at 114–124 (ETNISLSSQGG) shows a compositional bias: polar residues. The Q motif motif lies at 221–249 (GDFSKFPISKDTIKNLQAKGVTYLFPIQS). The 180-residue stretch at 252 to 431 (FHTVYSGKDV…KKYMRKQYEK (180 aa)) folds into the Helicase ATP-binding domain. Position 265–272 (265–272 (ARTGTGKT)) interacts with ATP. The DEAD box signature appears at 374-377 (DEVD). The Helicase C-terminal domain maps to 464–620 (DIVQVYSGSH…SSADAIKSLD (157 aa)). The tract at residues 750–800 (IQESERSFDGPRNRSFGGRGRRPFDRRNNSRNSSGGGGGRRGRSGGFRRGR) is disordered. Over residues 752–761 (ESERSFDGPR) the composition is skewed to basic and acidic residues. A compositionally biased stretch (basic residues) spans 789-800 (RRGRSGGFRRGR).

It belongs to the DEAD box helicase family. DDX21/DDX50 subfamily. As to expression, widely expressed. Expressed at higher level in stomach. Expressed at lower level compared to ddx21-a.

The protein resides in the nucleus. It is found in the nucleolus. It localises to the nucleoplasm. The protein localises to the cytoplasm. Its subcellular location is the cytosol. The protein resides in the mitochondrion. It catalyses the reaction ATP + H2O = ADP + phosphate + H(+). In terms of biological role, RNA helicase that acts as a sensor of the transcriptional status of both RNA polymerase (Pol) I and II: promotes ribosomal RNA (rRNA) processing and transcription from polymerase II (Pol II). Binds various RNAs, such as rRNAs, snoRNAs, 7SK and, at lower extent, mRNAs. In the nucleolus, localizes to rDNA locus, where it directly binds rRNAs and snoRNAs, and promotes rRNA transcription, processing and modification. Required for rRNA 2'-O-methylation, possibly by promoting the recruitment of late-acting snoRNAs SNORD56 and SNORD58 with pre-ribosomal complexes. In the nucleoplasm, binds 7SK RNA and is recruited to the promoters of Pol II-transcribed genes: acts by facilitating the release of P-TEFb from inhibitory 7SK snRNP in a manner that is dependent on its helicase activity, thereby promoting transcription of its target genes. Required to prevent R-loop-associated DNA damage and transcription-associated genomic instability. This chain is Nucleolar RNA helicase 2-B (ddx21-b), found in Xenopus laevis (African clawed frog).